The primary structure comprises 339 residues: Transmembrane protein 120B (339 aa).

Positions 1-67 (MSGQLERCER…KHTLQRYKRH (67 aa)) form a coiled coil. Helical transmembrane passes span 102-124 (GLYLNLVLGNVSVTLLSNQAKFA), 132-152 (FKLYLTIILLLGAVACRFVLH), 159-179 (VFNFLLVWYYCTLTIRESILI), 187-207 (GWWVSHHYVSTFLSGVMLTWP), 270-290 (FLLPFLFCGHFWQLYNAVTLF), and 302-322 (QVFVLALTFLILFLGNFLTTL).

This sequence belongs to the TMEM120 family. In terms of assembly, heterooligomer with TMEM120A. As to expression, expressed in inguinal and subcutaneous white adipose tissue and in brown adipose tissue.

The protein resides in the nucleus inner membrane. In terms of biological role, necessary for efficient adipogenesis. Does not show ion channel activity. This chain is Transmembrane protein 120B, found in Mus musculus (Mouse).